Consider the following 206-residue polypeptide: Threonine efflux protein (206 aa).

The chain crosses the membrane as a helical span at residues 1 to 21 (MMMLFFTVAMVHIVALMSPGP). The Periplasmic segment spans residues 22–43 (DFFFVSQTAVSRSRKEAMMGVL). The chain crosses the membrane as a helical span at residues 44 to 64 (GITCGVMVWAGVALLGLHLII). Topologically, residues 65–66 (EK) are cytoplasmic. Residues 67-87 (MAWLHTIIMVGGGLYLCWMGY) traverse the membrane as a helical segment. At 88 to 149 (QMLRGALKKQ…VGDNVGAAAR (62 aa)) the chain is on the periplasmic side. The helical transmembrane segment at 150–173 (WGIFALITLETLAWFTVVASLFAL) threads the bilayer. The Cytoplasmic segment spans residues 174 to 206 (PKMRRGYQRLAKWIDGFAGALFAGFGIHLIISR).

This sequence belongs to the Rht family.

The protein localises to the cell inner membrane. In terms of biological role, conducts the efflux of threonine. This chain is Threonine efflux protein (rhtC), found in Salmonella typhimurium (strain LT2 / SGSC1412 / ATCC 700720).